A 192-amino-acid chain; its full sequence is Ribonuclease HII (192 aa).

An RNase H type-2 domain is found at 2–187 (KNLCGIDEAG…KALGENEIGV (186 aa)). D8, E9, and D97 together coordinate a divalent metal cation.

Belongs to the RNase HII family. The cofactor is Mn(2+). Mg(2+) is required as a cofactor.

The protein resides in the cytoplasm. The enzyme catalyses Endonucleolytic cleavage to 5'-phosphomonoester.. In terms of biological role, endonuclease that specifically degrades the RNA of RNA-DNA hybrids. This chain is Ribonuclease HII, found in Aliarcobacter butzleri (strain RM4018) (Arcobacter butzleri).